The sequence spans 213 residues: Holliday junction branch migration complex subunit RuvA (213 aa).

Positions 1 to 69 (MISYLKGIVA…EEIPLLYGFS (69 aa)) are domain I. A domain II region spans residues 70–148 (SPAERDLFRH…EWRKSAGFFV (79 aa)). Positions 149-158 (ATEGPAPGIL) are flexible linker. Positions 158-213 (LEEVQMTLFALGYTAHEVSHALHVVSEDIGLPKDAYVEDWIKQAIAHLSSSEQVSH) are domain III.

It belongs to the RuvA family. As to quaternary structure, homotetramer. Forms an RuvA(8)-RuvB(12)-Holliday junction (HJ) complex. HJ DNA is sandwiched between 2 RuvA tetramers; dsDNA enters through RuvA and exits via RuvB. An RuvB hexamer assembles on each DNA strand where it exits the tetramer. Each RuvB hexamer is contacted by two RuvA subunits (via domain III) on 2 adjacent RuvB subunits; this complex drives branch migration. In the full resolvosome a probable DNA-RuvA(4)-RuvB(12)-RuvC(2) complex forms which resolves the HJ.

It is found in the cytoplasm. Functionally, the RuvA-RuvB-RuvC complex processes Holliday junction (HJ) DNA during genetic recombination and DNA repair, while the RuvA-RuvB complex plays an important role in the rescue of blocked DNA replication forks via replication fork reversal (RFR). RuvA specifically binds to HJ cruciform DNA, conferring on it an open structure. The RuvB hexamer acts as an ATP-dependent pump, pulling dsDNA into and through the RuvAB complex. HJ branch migration allows RuvC to scan DNA until it finds its consensus sequence, where it cleaves and resolves the cruciform DNA. The chain is Holliday junction branch migration complex subunit RuvA from Nostoc sp. (strain PCC 7120 / SAG 25.82 / UTEX 2576).